The sequence spans 40 residues: Large ribosomal subunit protein bL36 (40 aa).

The protein belongs to the bacterial ribosomal protein bL36 family.

This is Large ribosomal subunit protein bL36 from Corynebacterium diphtheriae (strain ATCC 700971 / NCTC 13129 / Biotype gravis).